The following is a 374-amino-acid chain: tRNA (guanine(26)-N(2))-dimethyltransferase (374 aa).

The Trm1 methyltransferase domain occupies 4–368 (IEATEGTTTF…APLPVLYDAI (365 aa)). S-adenosyl-L-methionine-binding residues include arginine 41, arginine 66, aspartate 82, aspartate 108, and alanine 109. Zn(2+) contacts are provided by cysteine 237, cysteine 240, cysteine 256, and cysteine 259.

Belongs to the class I-like SAM-binding methyltransferase superfamily. Trm1 family.

It catalyses the reaction guanosine(26) in tRNA + 2 S-adenosyl-L-methionine = N(2)-dimethylguanosine(26) in tRNA + 2 S-adenosyl-L-homocysteine + 2 H(+). In terms of biological role, dimethylates a single guanine residue at position 26 of a number of tRNAs using S-adenosyl-L-methionine as donor of the methyl groups. In Methanoregula boonei (strain DSM 21154 / JCM 14090 / 6A8), this protein is tRNA (guanine(26)-N(2))-dimethyltransferase.